The primary structure comprises 254 residues: MNDTLAITYSTPARLSEAEKLARQMKLPLVSLNSTDYSFLLVFTPAHLELRSTGTKAPGPLYVDFLKGATAHRRLFGGGRSQLIVRAVGLKSHPHPTILDLTAGLGRDAFVLANLGCDVLMIERNPVIALLLRDGLERAQSVEWFKSLKLELIEIDAQIYLSTLKKQFDVIYMDPMYPIRKKSALVKKEMRILRRLVGADDDAPQLLALALKKAKHRVVIKRPRLSNPLPGPAPDVVYEGKSSRFDVYLLKPSS.

S-adenosyl-L-methionine contacts are provided by residues 107–108, 123–124, and Asp-174; these read RD and ER.

It belongs to the methyltransferase superfamily. RsmJ family.

It is found in the cytoplasm. The catalysed reaction is guanosine(1516) in 16S rRNA + S-adenosyl-L-methionine = N(2)-methylguanosine(1516) in 16S rRNA + S-adenosyl-L-homocysteine + H(+). In terms of biological role, specifically methylates the guanosine in position 1516 of 16S rRNA. The chain is Ribosomal RNA small subunit methyltransferase J from Coxiella burnetii (strain CbuK_Q154) (Coxiella burnetii (strain Q154)).